The following is a 388-amino-acid chain: Succinate--CoA ligase [ADP-forming] subunit beta (388 aa).

Residues 9 to 245 enclose the ATP-grasp domain; that stretch reads KALLKKYGVS…KSQENERELK (237 aa). ATP contacts are provided by residues Lys46, 53-55, Glu100, Tyr103, and Glu108; that span reads GRG. Mg(2+) contacts are provided by Asn200 and Asp214. Substrate-binding positions include Asn265 and 322 to 324; that span reads GIV.

Belongs to the succinate/malate CoA ligase beta subunit family. In terms of assembly, heterotetramer of two alpha and two beta subunits. Mg(2+) is required as a cofactor.

It carries out the reaction succinate + ATP + CoA = succinyl-CoA + ADP + phosphate. The enzyme catalyses GTP + succinate + CoA = succinyl-CoA + GDP + phosphate. Its pathway is carbohydrate metabolism; tricarboxylic acid cycle; succinate from succinyl-CoA (ligase route): step 1/1. In terms of biological role, succinyl-CoA synthetase functions in the citric acid cycle (TCA), coupling the hydrolysis of succinyl-CoA to the synthesis of either ATP or GTP and thus represents the only step of substrate-level phosphorylation in the TCA. The beta subunit provides nucleotide specificity of the enzyme and binds the substrate succinate, while the binding sites for coenzyme A and phosphate are found in the alpha subunit. This Acinetobacter baylyi (strain ATCC 33305 / BD413 / ADP1) protein is Succinate--CoA ligase [ADP-forming] subunit beta.